The sequence spans 322 residues: MMESGEALLKKLDGRLSGLRGRLTPDTGMDKITWFRAGGPAQVLFQPSDEEDLSAFLKAVPEEIPLLVVGIGSNLLVRDGGVPGFVVRLSAKGFGEVEQVCDTQLRAGAAAPDKRVAAAALEAGLAGFHFYHGIPGGIGGALRMNAGANGVETRERVVEVRALDRKGEVHVLSNADMGYAYRHSSASPDLIFTSVLFEGVPGERDDIRRAMDEVQHHRETVQPVREKTGGSTFKNPEGTSAWKEIDKAGCRGLRVGGAQMSEMHCNFMINTGNATGHDLETLGETVRARVFENSGIRLHWEIKRLGLFREGEQLEEFLGKII.

The FAD-binding PCMH-type domain occupies arginine 36–glycine 202. The active site involves arginine 182. Serine 231 functions as the Proton donor in the catalytic mechanism. Glutamate 301 is a catalytic residue.

This sequence belongs to the MurB family. It depends on FAD as a cofactor.

The protein resides in the cytoplasm. The enzyme catalyses UDP-N-acetyl-alpha-D-muramate + NADP(+) = UDP-N-acetyl-3-O-(1-carboxyvinyl)-alpha-D-glucosamine + NADPH + H(+). The protein operates within cell wall biogenesis; peptidoglycan biosynthesis. Cell wall formation. This is UDP-N-acetylenolpyruvoylglucosamine reductase from Brucella suis (strain ATCC 23445 / NCTC 10510).